The primary structure comprises 148 residues: Arginine repressor (148 aa).

Belongs to the ArgR family.

The protein localises to the cytoplasm. Its pathway is amino-acid biosynthesis; L-arginine biosynthesis [regulation]. Functionally, regulates arginine biosynthesis genes. This is Arginine repressor from Chlorobium luteolum (strain DSM 273 / BCRC 81028 / 2530) (Pelodictyon luteolum).